The primary structure comprises 309 residues: Porphobilinogen deaminase (309 aa).

Residue cysteine 244 is modified to S-(dipyrrolylmethanemethyl)cysteine.

The protein belongs to the HMBS family. Monomer. The cofactor is dipyrromethane.

The enzyme catalyses 4 porphobilinogen + H2O = hydroxymethylbilane + 4 NH4(+). It participates in porphyrin-containing compound metabolism; protoporphyrin-IX biosynthesis; coproporphyrinogen-III from 5-aminolevulinate: step 2/4. Tetrapolymerization of the monopyrrole PBG into the hydroxymethylbilane pre-uroporphyrinogen in several discrete steps. The protein is Porphobilinogen deaminase of Listeria monocytogenes serotype 4b (strain CLIP80459).